Reading from the N-terminus, the 459-residue chain is ATP synthase subunit beta (459 aa).

ATP is bound at residue 147–154 (GGAGVGKT).

This sequence belongs to the ATPase alpha/beta chains family. In terms of assembly, F-type ATPases have 2 components, CF(1) - the catalytic core - and CF(0) - the membrane proton channel. CF(1) has five subunits: alpha(3), beta(3), gamma(1), delta(1), epsilon(1). CF(0) has three main subunits: a(1), b(2) and c(9-12). The alpha and beta chains form an alternating ring which encloses part of the gamma chain. CF(1) is attached to CF(0) by a central stalk formed by the gamma and epsilon chains, while a peripheral stalk is formed by the delta and b chains.

It is found in the cell inner membrane. It catalyses the reaction ATP + H2O + 4 H(+)(in) = ADP + phosphate + 5 H(+)(out). Produces ATP from ADP in the presence of a proton gradient across the membrane. The catalytic sites are hosted primarily by the beta subunits. The protein is ATP synthase subunit beta of Hydrogenovibrio crunogenus (strain DSM 25203 / XCL-2) (Thiomicrospira crunogena).